The sequence spans 276 residues: Protein canopy homolog 3 (276 aa).

The first 16 residues, 1–16, serve as a signal peptide directing secretion; that stretch reads MNVFISVVLFLGSARA. Positions 30-269 constitute a Saposin B-type domain; it reads NKCEVCKFVS…EEEIQKKVPL (240 aa). Disulfide bonds link Cys-32-Cys-190, Cys-35-Cys-178, and Cys-88-Cys-150. A coiled-coil region spans residues 137 to 162; the sequence is NETSAEVADLKKQCDVMVEQYEDVIE. A disordered region spans residues 206 to 276; it reads AEDKKKKKGK…VPLNQPKTEL (71 aa). 2 stretches are compositionally biased toward basic residues: residues 210-219 and 228-239; these read KKKKGKKKKG and KEKKVKKKKKKS. Basic and acidic residues predominate over residues 240–252; the sequence is KISDSESSKRRME.

Belongs to the canopy family.

Its subcellular location is the endoplasmic reticulum. Functionally, toll-like receptor (TLR)-specific co-chaperone for HSP90B1. Required for proper TLR folding and hence controls TLR exit from the endoplasmic reticulum. Consequently, required for immune responses. This chain is Protein canopy homolog 3 (cnpy3), found in Danio rerio (Zebrafish).